Reading from the N-terminus, the 139-residue chain is Endoribonuclease YbeY (139 aa).

Zn(2+)-binding residues include H110, H114, and H120.

It belongs to the endoribonuclease YbeY family. Zn(2+) is required as a cofactor.

The protein localises to the cytoplasm. In terms of biological role, single strand-specific metallo-endoribonuclease involved in late-stage 70S ribosome quality control and in maturation of the 3' terminus of the 16S rRNA. This chain is Endoribonuclease YbeY, found in Thermus thermophilus (strain ATCC BAA-163 / DSM 7039 / HB27).